The primary structure comprises 329 residues: Sex comb on midleg-like protein 1 (329 aa).

2 positions are modified to phosphoserine: Ser-138 and Ser-238. An SAM domain is found at 258-325 (WSVEAVVLFL…YYIDRLKQGK (68 aa)).

Belongs to the SCM family.

It is found in the nucleus. In terms of biological role, putative Polycomb group (PcG) protein. PcG proteins act by forming multiprotein complexes, which are required to maintain the transcriptionally repressive state of homeotic genes throughout development. May be involved in spermatogenesis during sexual maturation. The chain is Sex comb on midleg-like protein 1 (SCML1) from Hoolock hoolock (Western hoolock gibbon).